The following is a 399-amino-acid chain: Cell division protein FtsZ (399 aa).

Residues 18 to 22, 105 to 107, Glu-136, Arg-140, and Asp-184 contribute to the GTP site; these read GGGVN and GTG. The disordered stretch occupies residues 311-399; the sequence is GFDGGQPPSK…EELDVPDFLK (89 aa). Acidic residues predominate over residues 388–399; the sequence is AAEELDVPDFLK.

This sequence belongs to the FtsZ family. As to quaternary structure, homodimer. Polymerizes to form a dynamic ring structure in a strictly GTP-dependent manner. Interacts directly with several other division proteins.

It localises to the cytoplasm. In terms of biological role, essential cell division protein that forms a contractile ring structure (Z ring) at the future cell division site. The regulation of the ring assembly controls the timing and the location of cell division. One of the functions of the FtsZ ring is to recruit other cell division proteins to the septum to produce a new cell wall between the dividing cells. Binds GTP and shows GTPase activity. This Streptomyces coelicolor (strain ATCC BAA-471 / A3(2) / M145) protein is Cell division protein FtsZ.